The sequence spans 718 residues: DNA ligase (718 aa).

Residues 44-48, 93-94, and E127 each bind NAD(+); these read DADYD and SL. K129 acts as the N6-AMP-lysine intermediate in catalysis. NAD(+) is bound by residues R150, E186, K302, and K326. Positions 432, 435, 456, and 462 each coordinate Zn(2+). One can recognise a BRCT domain in the interval 640–718; sequence TAGSPVAGKT…EDQWLALISG (79 aa).

The protein belongs to the NAD-dependent DNA ligase family. LigA subfamily. Requires Mg(2+) as cofactor. Mn(2+) serves as cofactor.

It carries out the reaction NAD(+) + (deoxyribonucleotide)n-3'-hydroxyl + 5'-phospho-(deoxyribonucleotide)m = (deoxyribonucleotide)n+m + AMP + beta-nicotinamide D-nucleotide.. Its function is as follows. DNA ligase that catalyzes the formation of phosphodiester linkages between 5'-phosphoryl and 3'-hydroxyl groups in double-stranded DNA using NAD as a coenzyme and as the energy source for the reaction. It is essential for DNA replication and repair of damaged DNA. The sequence is that of DNA ligase from Rhizobium johnstonii (strain DSM 114642 / LMG 32736 / 3841) (Rhizobium leguminosarum bv. viciae).